Here is a 391-residue protein sequence, read N- to C-terminus: MSSRENPSGICKSIPKLISSFVDTFVDYSVSGIFLPQDPSSQNEILQTRFEKPERLVAIGDLHGDLEKSREAFKIAGLIDSSDRWTGGSTMVVQVGDVLDRGGEELKILYFLEKLKREAERAGGKILTMNGNHEIMNIEGDFRYVTKKGLEEFQIWADWYCLGNKMKTLCSGLDKPKDPYEGIPMSFPRMRADCFEGIRARIAALRPDGPIAKRFLTKNQTVAVVGDSVFVHGGLLAEHIEYGLERINEEVRGWINGFKGGRYAPAYCRGGNSVVWLRKFSEEMAHKCDCAALEHALSTIPGVKRMIMGHTIQDAGINGVCNDKAIRIDVGMSKGCADGLPEVLEIRRDSGVRIVTSNPLYKENLYSHVAPDSKTGLGLLVPVPKQVEVKA.

Residues D61, H63, D97, and N132 each contribute to the Mn(2+) site. H133 serves as the catalytic Proton donor. Residues H232 and H295 each coordinate Mn(2+).

The protein belongs to the metallophosphoesterase superfamily. SLP family. Mn(2+) serves as cofactor. In terms of tissue distribution, expressed in roots and siliques (at protein level).

The protein resides in the cytoplasm. Its subcellular location is the cytosol. In terms of biological role, shows phosphatase activity, hydrolyzing the artificial substrate para-nitrophenylphosphate (pNPP) in vitro. This chain is Shewanella-like protein phosphatase 2, found in Arabidopsis thaliana (Mouse-ear cress).